A 635-amino-acid chain; its full sequence is Isethionate TRAP transporter permease protein DctMQ (635 aa).

The next 16 helical transmembrane spans lie at 38–58 (KPFL…QTLY), 75–95 (TEEM…PVAI), 117–137 (ISWI…LWQS), 154–174 (LQLP…LMAV), 192–212 (TVIG…ADYI), 217–237 (VLFG…IGLG), 266–286 (FPIM…AGGL), 299–319 (GALP…FAAI), 350–370 (AIVA…PFVV), 379–399 (IGKL…ALMA), 431–451 (WALM…MTPT), 453–473 (AAAL…RELS), 481–501 (VVEA…ATIF), 526–546 (IAIL…MEAL), 572–592 (IIMV…VNLF), and 609–629 (VLPL…VPAI).

The protein in the N-terminal section; belongs to the TRAP transporter small permease family. It in the C-terminal section; belongs to the TRAP transporter large permease family. As to quaternary structure, the complex comprises the periplasmic solute receptor protein DctP, and the fused transmembrane protein DctMQ.

It localises to the cell inner membrane. It functions in the pathway organosulfur degradation; alkanesulfonate degradation. Its function is as follows. Part of the tripartite ATP-independent periplasmic (TRAP) transport system DctPQM involved in the uptake of isethionate (2-hydroxyethanesulfonate), which is then catabolized by enzymes encoded by adjacent genes in the locus. Thereby is involved in an anaerobic respiration pathway that converts the sulfonate isethionate to ammonia, acetate and sulfide. This Oleidesulfovibrio alaskensis (strain ATCC BAA-1058 / DSM 17464 / G20) (Desulfovibrio alaskensis) protein is Isethionate TRAP transporter permease protein DctMQ.